Consider the following 134-residue polypeptide: Ribosome-binding factor A (134 aa).

The protein belongs to the RbfA family. In terms of assembly, monomer. Binds 30S ribosomal subunits, but not 50S ribosomal subunits or 70S ribosomes.

It is found in the cytoplasm. Its function is as follows. One of several proteins that assist in the late maturation steps of the functional core of the 30S ribosomal subunit. Associates with free 30S ribosomal subunits (but not with 30S subunits that are part of 70S ribosomes or polysomes). Required for efficient processing of 16S rRNA. May interact with the 5'-terminal helix region of 16S rRNA. This chain is Ribosome-binding factor A, found in Bartonella bacilliformis (strain ATCC 35685 / KC583 / Herrer 020/F12,63).